Consider the following 372-residue polypeptide: Aminomethyltransferase (372 aa).

Belongs to the GcvT family. As to quaternary structure, the glycine cleavage system is composed of four proteins: P, T, L and H.

It catalyses the reaction N(6)-[(R)-S(8)-aminomethyldihydrolipoyl]-L-lysyl-[protein] + (6S)-5,6,7,8-tetrahydrofolate = N(6)-[(R)-dihydrolipoyl]-L-lysyl-[protein] + (6R)-5,10-methylene-5,6,7,8-tetrahydrofolate + NH4(+). The glycine cleavage system catalyzes the degradation of glycine. The chain is Aminomethyltransferase from Burkholderia cenocepacia (strain ATCC BAA-245 / DSM 16553 / LMG 16656 / NCTC 13227 / J2315 / CF5610) (Burkholderia cepacia (strain J2315)).